Here is a 199-residue protein sequence, read N- to C-terminus: NAD(P)H dehydrogenase (quinone) (199 aa).

Positions 4-190 (VLVLYYSSYG…TGARYQGRKI (187 aa)) constitute a Flavodoxin-like domain. FMN-binding positions include 10 to 15 (SSYGHL) and 78 to 80 (TRF). Residue Y12 coordinates NAD(+). Substrate is bound at residue W98. Residues 113–119 (STATQHG) and H134 contribute to the FMN site.

Belongs to the WrbA family. Requires FMN as cofactor.

The enzyme catalyses a quinone + NADH + H(+) = a quinol + NAD(+). It catalyses the reaction a quinone + NADPH + H(+) = a quinol + NADP(+). This is NAD(P)H dehydrogenase (quinone) from Caulobacter vibrioides (strain ATCC 19089 / CIP 103742 / CB 15) (Caulobacter crescentus).